Consider the following 271-residue polypeptide: Tryptophan synthase alpha chain (271 aa).

Catalysis depends on proton acceptor residues glutamate 49 and aspartate 60.

This sequence belongs to the TrpA family. In terms of assembly, tetramer of two alpha and two beta chains.

The enzyme catalyses (1S,2R)-1-C-(indol-3-yl)glycerol 3-phosphate + L-serine = D-glyceraldehyde 3-phosphate + L-tryptophan + H2O. Its pathway is amino-acid biosynthesis; L-tryptophan biosynthesis; L-tryptophan from chorismate: step 5/5. Functionally, the alpha subunit is responsible for the aldol cleavage of indoleglycerol phosphate to indole and glyceraldehyde 3-phosphate. In Blochmanniella floridana, this protein is Tryptophan synthase alpha chain.